Consider the following 102-residue polypeptide: Monothiol glutaredoxin-S7 (102 aa).

Residues 1-101 enclose the Glutaredoxin domain; sequence MEKLQKMTSE…PMLKRVGALW (101 aa). Cys-21 is a binding site for [2Fe-2S] cluster. The short motif at 99–102 is the Responsive for interaction with TGA factors element; the sequence is ALWL.

This sequence belongs to the glutaredoxin family. CC-type subfamily.

Its subcellular location is the cytoplasm. It is found in the nucleus. Its function is as follows. May only reduce GSH-thiol disulfides, but not protein disulfides. The polypeptide is Monothiol glutaredoxin-S7 (GRXS7) (Arabidopsis thaliana (Mouse-ear cress)).